We begin with the raw amino-acid sequence, 432 residues long: 3-isopropylmalate dehydratase large subunit (432 aa).

Cys299, Cys364, and Cys367 together coordinate [4Fe-4S] cluster.

Belongs to the aconitase/IPM isomerase family. LeuC type 2 subfamily. As to quaternary structure, heterodimer of LeuC and LeuD. [4Fe-4S] cluster is required as a cofactor.

It carries out the reaction (2R,3S)-3-isopropylmalate = (2S)-2-isopropylmalate. It functions in the pathway amino-acid biosynthesis; L-leucine biosynthesis; L-leucine from 3-methyl-2-oxobutanoate: step 2/4. Catalyzes the isomerization between 2-isopropylmalate and 3-isopropylmalate, via the formation of 2-isopropylmaleate. The chain is 3-isopropylmalate dehydratase large subunit from Aquifex aeolicus (strain VF5).